The chain runs to 458 residues: Cysteine--tRNA ligase (458 aa).

Position 29 (C29) interacts with Zn(2+). The 'HIGH' region motif lies at 31 to 41 (MTVYDLCHLGH). C213, H238, and E242 together coordinate Zn(2+). The 'KMSKS' region motif lies at 270–274 (KMSKS). Position 273 (K273) interacts with ATP.

The protein belongs to the class-I aminoacyl-tRNA synthetase family. As to quaternary structure, monomer. Requires Zn(2+) as cofactor.

It localises to the cytoplasm. The catalysed reaction is tRNA(Cys) + L-cysteine + ATP = L-cysteinyl-tRNA(Cys) + AMP + diphosphate. The polypeptide is Cysteine--tRNA ligase (Acidovorax sp. (strain JS42)).